The following is a 206-amino-acid chain: Ribosomal RNA small subunit methyltransferase G (206 aa).

S-adenosyl-L-methionine-binding positions include G74, L79, 125–126 (VE), and R140.

It belongs to the methyltransferase superfamily. RNA methyltransferase RsmG family.

It localises to the cytoplasm. The catalysed reaction is guanosine(527) in 16S rRNA + S-adenosyl-L-methionine = N(7)-methylguanosine(527) in 16S rRNA + S-adenosyl-L-homocysteine. In terms of biological role, specifically methylates the N7 position of guanine in position 527 of 16S rRNA. The sequence is that of Ribosomal RNA small subunit methyltransferase G from Shewanella sp. (strain MR-4).